We begin with the raw amino-acid sequence, 292 residues long: Cholesterol ring-cleaving hydrolase IpdA subunit (292 aa).

The protein belongs to the 3-oxoacid CoA-transferase subunit A family. Heterotetramer composed of 2 IpdA subunits and 2 IpdB subunits.

The catalysed reaction is (3E)-2-(2-carboxylatoethyl)-3-methyl-6-oxocyclohex-1-ene-1-carboxyl-CoA + H2O = 6-methyl-3,7-dioxodecanedioyl-CoA. Its pathway is steroid metabolism; cholesterol degradation. Involved in the final steps of cholesterol and steroid degradation. Opens the last steroid ring of cholesterol by catalyzing the hydrolysis of (3E)-2-(2-carboxylatoethyl)-3-methyl-6-oxocyclohex-1-ene-1-carboxyl-CoA (COCHEA-CoA) to 6-methyl-3,7-dioxodecanedioyl-CoA (MeDODA-CoA). In Mycobacterium tuberculosis (strain CDC 1551 / Oshkosh), this protein is Cholesterol ring-cleaving hydrolase IpdA subunit.